Reading from the N-terminus, the 157-residue chain is Small ribosomal subunit protein uS7 (157 aa).

The protein belongs to the universal ribosomal protein uS7 family. As to quaternary structure, part of the 30S ribosomal subunit. Contacts proteins S9 and S11.

Its function is as follows. One of the primary rRNA binding proteins, it binds directly to 16S rRNA where it nucleates assembly of the head domain of the 30S subunit. Is located at the subunit interface close to the decoding center, probably blocks exit of the E-site tRNA. The chain is Small ribosomal subunit protein uS7 from Chloroflexus aggregans (strain MD-66 / DSM 9485).